We begin with the raw amino-acid sequence, 411 residues long: Ornithine cyclodeaminase (411 aa).

The NAD(+) site is built by asparagine 236, alanine 237, aspartate 315, threonine 347, methionine 348, leucine 349, histidine 350, aspartate 368, aspartate 391, and valine 392.

The protein belongs to the AgrE/ArgZ ornithine cyclodeaminase family. Requires NAD(+) as cofactor.

The catalysed reaction is L-ornithine = L-proline + NH4(+). Catalyzes the conversion of ornithine to proline, with the release of ammonia. In Methanothermobacter thermautotrophicus (strain ATCC 29096 / DSM 1053 / JCM 10044 / NBRC 100330 / Delta H) (Methanobacterium thermoautotrophicum), this protein is Ornithine cyclodeaminase.